Consider the following 275-residue polypeptide: Multivesicular body subunit 12A (275 aa).

One can recognise an MABP domain in the interval 5-145; it reads STPITGLAWI…GLVFWCRKGS (141 aa). The SH3-binding signature appears at 151-156; sequence PTPKPR. The UMA domain maps to 216–267; the sequence is IDGIPFTIHPMFENTINNSSVAASDFRDLHIKTLSEIESEYNYGFVVEKTAA.

This sequence belongs to the MVB12 family. As to quaternary structure, component of the ESCRT-I complex (endosomal sorting complex required for transport I).

The protein resides in the cytoplasm. Its subcellular location is the endosome. The protein localises to the late endosome membrane. In terms of biological role, component of the ESCRT-I complex, a regulator of vesicular trafficking process. Required for the sorting of endocytic ubiquitinated cargos into multivesicular bodies. This Xenopus laevis (African clawed frog) protein is Multivesicular body subunit 12A (mvb12a).